The sequence spans 367 residues: Quinolinate synthase (367 aa).

The iminosuccinate site is built by His-45 and Ser-62. Cys-109 provides a ligand contact to [4Fe-4S] cluster. Residues Tyr-140–Asn-142 and Ser-161 contribute to the iminosuccinate site. Cys-229 is a binding site for [4Fe-4S] cluster. Iminosuccinate-binding positions include His-255–Glu-257 and Thr-272. Cys-319 serves as a coordination point for [4Fe-4S] cluster.

The protein belongs to the quinolinate synthase family. Type 3 subfamily. The cofactor is [4Fe-4S] cluster.

It is found in the cytoplasm. The catalysed reaction is iminosuccinate + dihydroxyacetone phosphate = quinolinate + phosphate + 2 H2O + H(+). The protein operates within cofactor biosynthesis; NAD(+) biosynthesis; quinolinate from iminoaspartate: step 1/1. In terms of biological role, catalyzes the condensation of iminoaspartate with dihydroxyacetone phosphate to form quinolinate. This Geobacillus thermodenitrificans (strain NG80-2) protein is Quinolinate synthase.